A 487-amino-acid chain; its full sequence is Probable UDP-N-acetylglucosamine pyrophosphorylase (487 aa).

A Substrate binding motif is present at residues 105–108; it reads LAGG. UTP is bound by residues 105-108, K119, Q198, and G225; that span reads LAGG. N226 lines the substrate pocket. D256 serves as a coordination point for UTP. The Substrate binding signature appears at 307–308; the sequence is EY. Residue K382 coordinates UTP. Position 412 (K412) interacts with substrate.

Belongs to the UDPGP type 1 family.

It is found in the cytoplasm. The enzyme catalyses N-acetyl-alpha-D-glucosamine 1-phosphate + UTP + H(+) = UDP-N-acetyl-alpha-D-glucosamine + diphosphate. It functions in the pathway nucleotide-sugar biosynthesis; UDP-N-acetyl-alpha-D-glucosamine biosynthesis; UDP-N-acetyl-alpha-D-glucosamine from N-acetyl-alpha-D-glucosamine 1-phosphate: step 1/1. The chain is Probable UDP-N-acetylglucosamine pyrophosphorylase (uap1) from Dictyostelium discoideum (Social amoeba).